Consider the following 565-residue polypeptide: Sulfite reductase [NADPH] hemoprotein beta-component (565 aa).

The [4Fe-4S] cluster site is built by cysteine 429, cysteine 435, cysteine 474, and cysteine 478. Cysteine 478 provides a ligand contact to siroheme.

The protein belongs to the nitrite and sulfite reductase 4Fe-4S domain family. As to quaternary structure, alpha(8)-beta(8). The alpha component is a flavoprotein, the beta component is a hemoprotein. It depends on siroheme as a cofactor. [4Fe-4S] cluster is required as a cofactor.

It catalyses the reaction hydrogen sulfide + 3 NADP(+) + 3 H2O = sulfite + 3 NADPH + 4 H(+). Its pathway is sulfur metabolism; hydrogen sulfide biosynthesis; hydrogen sulfide from sulfite (NADPH route): step 1/1. Functionally, component of the sulfite reductase complex that catalyzes the 6-electron reduction of sulfite to sulfide. This is one of several activities required for the biosynthesis of L-cysteine from sulfate. The polypeptide is Sulfite reductase [NADPH] hemoprotein beta-component (Shewanella sp. (strain W3-18-1)).